A 290-amino-acid polypeptide reads, in one-letter code: Membrane protein insertase YidC (290 aa).

An N-terminal signal peptide occupies residues 1–19 (MKKKTLLPLFLGIMVFLAG). The N-palmitoyl cysteine moiety is linked to residue Cys-20. The S-diacylglycerol cysteine moiety is linked to residue Cys-20. A run of 5 helical transmembrane segments spans residues 56–76 (YGLA…PFML), 134–154 (MLGC…YFVL), 176–196 (PDIW…YVSS), 207–224 (GYMM…ISLS), and 229–251 (LGLY…NIYY). Residues 270 to 290 (HNGGSNKKGKNTQVVSKKKKK) form a disordered region.

This sequence belongs to the OXA1/ALB3/YidC family. Type 2 subfamily.

The protein localises to the cell membrane. Functionally, required for the insertion and/or proper folding and/or complex formation of integral membrane proteins into the membrane. Involved in integration of membrane proteins that insert both dependently and independently of the Sec translocase complex, as well as at least some lipoproteins. The protein is Membrane protein insertase YidC of Staphylococcus aureus (strain MRSA252).